A 340-amino-acid chain; its full sequence is Aliphatic sulfonates import ATP-binding protein SsuB 1 (340 aa).

The interval 44 to 72 (THHHARVAAQGHARGDAQPPAGALARDDG) is disordered. The ABC transporter domain occupies 80–299 (VQLRGVGKRY…ARASAGFAAL (220 aa)). 112–119 (GRSGCGKS) is an ATP binding site.

Belongs to the ABC transporter superfamily. Aliphatic sulfonates importer (TC 3.A.1.17.2) family. In terms of assembly, the complex is composed of two ATP-binding proteins (SsuB), two transmembrane proteins (SsuC) and a solute-binding protein (SsuA).

It localises to the cell inner membrane. It carries out the reaction ATP + H2O + aliphatic sulfonate-[sulfonate-binding protein]Side 1 = ADP + phosphate + aliphatic sulfonateSide 2 + [sulfonate-binding protein]Side 1.. Its function is as follows. Part of the ABC transporter complex SsuABC involved in aliphatic sulfonates import. Responsible for energy coupling to the transport system. This Paraburkholderia xenovorans (strain LB400) protein is Aliphatic sulfonates import ATP-binding protein SsuB 1.